We begin with the raw amino-acid sequence, 160 residues long: MKLNDISDNPGSSKSRMRVGRGIGSGKGKTCGRGVKGQKARTGVAIKGFEGGQMPIHRRLPKRGFWNPFSTDYNEVNLGRIQTAIDAGKLNVALPVTIEALVEAGVCAKARDGVKILGNGELKAKLTFEVASASKTAVAAIEQLGGSITLLKAQPAAAEA.

Residues 1–14 (MKLNDISDNPGSSK) are compositionally biased toward polar residues. The interval 1–35 (MKLNDISDNPGSSKSRMRVGRGIGSGKGKTCGRGV) is disordered. A compositionally biased stretch (gly residues) spans 21-35 (RGIGSGKGKTCGRGV).

The protein belongs to the universal ribosomal protein uL15 family. In terms of assembly, part of the 50S ribosomal subunit.

Functionally, binds to the 23S rRNA. The sequence is that of Large ribosomal subunit protein uL15 from Beijerinckia indica subsp. indica (strain ATCC 9039 / DSM 1715 / NCIMB 8712).